We begin with the raw amino-acid sequence, 255 residues long: Small ribosomal subunit protein eS1B (255 aa).

Residue alanine 2 is modified to N-acetylalanine; partial. The residue at position 245 (serine 245) is a Phosphoserine. Residue lysine 248 forms a Glycyl lysine isopeptide (Lys-Gly) (interchain with G-Cter in ubiquitin) linkage. Threonine 254 carries the phosphothreonine modification.

The protein belongs to the eukaryotic ribosomal protein eS1 family. As to quaternary structure, component of the small ribosomal subunit. Mature ribosomes consist of a small (40S) and a large (60S) subunit. The 40S subunit contains about 33 different proteins and 1 molecule of RNA (18S). The 60S subunit contains about 49 different proteins and 3 molecules of RNA (25S, 5.8S and 5S).

The protein localises to the cytoplasm. This is Small ribosomal subunit protein eS1B from Saccharomyces cerevisiae (strain RM11-1a) (Baker's yeast).